The primary structure comprises 278 residues: Biotin synthase (278 aa).

Positions 1–227 (MQIMLCAISN…QSVVMVAGGR (227 aa)) constitute a Radical SAM core domain. Residues Cys-16, Cys-20, and Cys-23 each coordinate [4Fe-4S] cluster. Residues Cys-60, Asn-96, and Cys-154 each contribute to the [2Fe-2S] cluster site.

Belongs to the radical SAM superfamily. Biotin synthase family. Homodimer. [4Fe-4S] cluster serves as cofactor. It depends on [2Fe-2S] cluster as a cofactor.

It carries out the reaction (4R,5S)-dethiobiotin + (sulfur carrier)-SH + 2 reduced [2Fe-2S]-[ferredoxin] + 2 S-adenosyl-L-methionine = (sulfur carrier)-H + biotin + 2 5'-deoxyadenosine + 2 L-methionine + 2 oxidized [2Fe-2S]-[ferredoxin]. It functions in the pathway cofactor biosynthesis; biotin biosynthesis; biotin from 7,8-diaminononanoate: step 2/2. In terms of biological role, catalyzes the conversion of dethiobiotin (DTB) to biotin by the insertion of a sulfur atom into dethiobiotin via a radical-based mechanism. The sequence is that of Biotin synthase from Campylobacter jejuni subsp. jejuni serotype O:2 (strain ATCC 700819 / NCTC 11168).